A 358-amino-acid polypeptide reads, in one-letter code: Ganglioside-induced differentiation-associated protein 1 (358 aa).

In terms of domain architecture, GST N-terminal spans 24-105 (VKLILYHWTH…YLEQTFLDEK (82 aa)). Glycyl lysine isopeptide (Lys-Gly) (interchain with G-Cter in ubiquitin) cross-links involve residues Lys-50, Lys-172, Lys-173, Lys-188, and Lys-190. In terms of domain architecture, GST C-terminal spans 153–309 (PAYATTRIRS…LISAVLPTAF (157 aa)). The residue at position 203 (Lys-203) is an N6-acetyllysine; alternate. Lys-203 is covalently cross-linked (Glycyl lysine isopeptide (Lys-Gly) (interchain with G-Cter in ubiquitin); alternate). Residues Lys-206, Lys-207, and Lys-214 each participate in a glycyl lysine isopeptide (Lys-Gly) (interchain with G-Cter in ubiquitin) cross-link. Helical transmembrane passes span 292–312 (VLGH…FRVA) and 320–340 (LGTT…FMLF). The interval 320 to 358 (LGTTLVVGLLAGMGYFAFMLFRKRLGSMILALRPRPNYF) is required for mitochondrial localization.

This sequence belongs to the GST superfamily. In terms of assembly, homodimer. Ubiquitinated by PRKN during mitophagy, leading to its degradation and enhancement of mitophagy. Deubiquitinated by USP30.

Its subcellular location is the mitochondrion outer membrane. The protein resides in the cytoplasm. Its function is as follows. Regulates the mitochondrial network by promoting mitochondrial fission. The polypeptide is Ganglioside-induced differentiation-associated protein 1 (GDAP1) (Bos taurus (Bovine)).